The sequence spans 361 residues: Phospho-N-acetylmuramoyl-pentapeptide-transferase (361 aa).

10 consecutive transmembrane segments (helical) span residues 27–47 (ILAS…MIRW), 70–90 (GTPT…CLLW), 97–117 (SLWL…VDDY), 134–154 (YFWQ…NASL), 167–187 (TVTW…IVGS), 199–219 (GLAI…AYAS), 236–256 (TGEL…FLWY), 263–283 (VFMG…VAVV), 288–308 (LVLL…ILQV), and 338–358 (KVIV…LATL).

This sequence belongs to the glycosyltransferase 4 family. MraY subfamily. Mg(2+) is required as a cofactor.

The protein resides in the cell inner membrane. It catalyses the reaction UDP-N-acetyl-alpha-D-muramoyl-L-alanyl-gamma-D-glutamyl-meso-2,6-diaminopimeloyl-D-alanyl-D-alanine + di-trans,octa-cis-undecaprenyl phosphate = di-trans,octa-cis-undecaprenyl diphospho-N-acetyl-alpha-D-muramoyl-L-alanyl-D-glutamyl-meso-2,6-diaminopimeloyl-D-alanyl-D-alanine + UMP. It participates in cell wall biogenesis; peptidoglycan biosynthesis. Catalyzes the initial step of the lipid cycle reactions in the biosynthesis of the cell wall peptidoglycan: transfers peptidoglycan precursor phospho-MurNAc-pentapeptide from UDP-MurNAc-pentapeptide onto the lipid carrier undecaprenyl phosphate, yielding undecaprenyl-pyrophosphoryl-MurNAc-pentapeptide, known as lipid I. In Legionella pneumophila subsp. pneumophila (strain Philadelphia 1 / ATCC 33152 / DSM 7513), this protein is Phospho-N-acetylmuramoyl-pentapeptide-transferase.